Here is a 595-residue protein sequence, read N- to C-terminus: NADH-quinone oxidoreductase subunit C/D (595 aa).

Residues 1–186 are NADH dehydrogenase I subunit C; the sequence is MAETDIAMPE…TPYMQDKAKQ (186 aa). The segment at 210 to 595 is NADH dehydrogenase I subunit D; the sequence is DFMFLNLGPN…IDVVMADVDR (386 aa).

In the N-terminal section; belongs to the complex I 30 kDa subunit family. It in the C-terminal section; belongs to the complex I 49 kDa subunit family. As to quaternary structure, NDH-1 is composed of 13 different subunits. Subunits NuoB, CD, E, F, and G constitute the peripheral sector of the complex.

It localises to the cell inner membrane. It carries out the reaction a quinone + NADH + 5 H(+)(in) = a quinol + NAD(+) + 4 H(+)(out). Functionally, NDH-1 shuttles electrons from NADH, via FMN and iron-sulfur (Fe-S) centers, to quinones in the respiratory chain. The immediate electron acceptor for the enzyme in this species is believed to be ubiquinone. Couples the redox reaction to proton translocation (for every two electrons transferred, four hydrogen ions are translocated across the cytoplasmic membrane), and thus conserves the redox energy in a proton gradient. The chain is NADH-quinone oxidoreductase subunit C/D from Acinetobacter baumannii (strain AYE).